The chain runs to 1037 residues: Presequence protease, mitochondrial (1037 aa).

The transit peptide at 1 to 15 (MWRCGGRQGLGVLRR) directs the protein to the mitochondrion. His-104 contributes to the Zn(2+) binding site. The active-site Proton acceptor is the Glu-107. Residues His-108 and Glu-205 each contribute to the Zn(2+) site. A disulfide bridge connects residues Cys-119 and Cys-556. An N6-acetyllysine modification is found at Lys-759. Lys-770 is modified (N6-acetyllysine; alternate). Lys-770 carries the N6-succinyllysine; alternate modification. Residues 803-834 (IGRSKKERRPVRPHTVEKPVPSSSGGDAHVPH) are disordered. Basic residues predominate over residues 804–814 (GRSKKERRPVR). Lys-849 carries the N6-succinyllysine modification. N6-acetyllysine is present on Lys-884. At Lys-946 the chain carries N6-succinyllysine.

Belongs to the peptidase M16 family. PreP subfamily. Monomer and homodimer; homodimerization is induced by binding of the substrate. Zn(2+) serves as cofactor. Post-translationally, a disulfide bond locks the enzyme in the closed conformation preventing substrate entry into the catalytic chamber.

It is found in the mitochondrion matrix. Mainly exists in a closed and catalytically competent conformation but a closed-to-open switch allows substrate entry into the catalytic chamber. Substrate binding induces closure and dimerization. A disulfide bond may lock the enzyme in a closed conformation preventing substrate entry into the catalytic chamber, participating in redox regulation of the enzyme. Inhibited by metal-chelating agents. Inhibited by nickel and zinc excess, and slightly activated by manganese. Functionally, metalloendopeptidase of the mitochondrial matrix that functions in peptide cleavage and degradation rather than in protein processing. Has an ATP-independent activity. Specifically cleaves peptides in the range of 5 to 65 residues. Shows a preference for cleavage after small polar residues and before basic residues, but without any positional preference. Degrades the transit peptides of mitochondrial proteins after their cleavage. Also degrades other unstructured peptides. It is also able to degrade amyloid-beta protein 40, one of the peptides produced by APP processing, when it accumulates in mitochondrion. It is a highly efficient protease, at least toward amyloid-beta protein 40. Cleaves that peptide at a specific position and is probably not processive, releasing digested peptides intermediates that can be further cleaved subsequently. It is also able to degrade amyloid-beta protein 42. The polypeptide is Presequence protease, mitochondrial (Pongo abelii (Sumatran orangutan)).